A 185-amino-acid polypeptide reads, in one-letter code: DAN domain family member 5 (185 aa).

The signal sequence occupies residues 1 to 23 (MFRSQFTTLLGLFSGAWLPTGSG). Residue N39 is glycosylated (N-linked (GlcNAc...) asparagine). 4 cysteine pairs are disulfide-bonded: C97/C144, C111/C158, C121/C179, and C125/C181. One can recognise a CTCK domain in the interval 97–182 (CKALSFVQVI…TVLVQKCQCR (86 aa)).

It belongs to the DAN family. Expressed throughout the neural retina and in the photoreceptor nuclear layer. In the retina, widely expressed in inner nuclear layer, as well as in the ganglion cell layer.

The protein resides in the secreted. Antagonist of the extracellular signaling protein NODAL, which is required for correct left-right patterning during embryonic development. Antagonist of BMP4 signaling. Antagonist of TGF-beta signaling. Independently of its role in left-right axis establishment, plays a role during heart development, possibly through the regulation of TGF-beta/Nodal signaling pathway. Displays anti-angiogenic activity by inhibiting endothelial sprouting, migration, and proliferation. Once internalized by endothelial cells, may alter their redox and glycolytic balance. The polypeptide is DAN domain family member 5 (Dand5) (Mus musculus (Mouse)).